Consider the following 225-residue polypeptide: Mediator of RNA polymerase II transcription subunit 8 (225 aa).

The disordered stretch occupies residues 1–24; that stretch reads MNSIHSANSNTVSTSEINTSQIPT. Positions 170-204 form a coiled coil; the sequence is VEELKYLDSEDEKKETEENKKIENQKYEEELKITA.

Belongs to the Mediator complex subunit 8 family. As to quaternary structure, component of the Mediator complex.

It localises to the nucleus. Component of the Mediator complex, a coactivator involved in the regulated transcription of nearly all RNA polymerase II-dependent genes. Mediator functions as a bridge to convey information from gene-specific regulatory proteins to the basal RNA polymerase II transcription machinery. Mediator is recruited to promoters by direct interactions with regulatory proteins and serves as a scaffold for the assembly of a functional preinitiation complex with RNA polymerase II and the general transcription factors. This is Mediator of RNA polymerase II transcription subunit 8 (MED8) from Debaryomyces hansenii (strain ATCC 36239 / CBS 767 / BCRC 21394 / JCM 1990 / NBRC 0083 / IGC 2968) (Yeast).